Reading from the N-terminus, the 263-residue chain is MTLREKYGEWGIILGATEGVGKAFCERLAKEGMNVVMVGRREEKLKELGEELKNTYEIDYKVVKADFSLPDATDKIFAATENLDMGFMAYVACLHSFGKIQDTPWEKHEAMINVNVVTFMKCFYHYMKIFAAQDRGAVINVSSMTGISSSPWNGQYGAGKAFILKMTEAVACETEKTNVDVEVITLGTTLTPSLLSNLPGGPQGEAVMKTAQTPEEVVDEAFEKLGKELSVISGERNKASVHDWKANHTEDDYIRYMGSFYQE.

NADP(+) contacts are provided by residues 17-21 (TEGVG), 40-41 (RR), and 66-67 (DF). Y156 serves as the catalytic Proton acceptor. S240 is an NADP(+) binding site.

This sequence belongs to the short-chain dehydrogenases/reductases (SDR) family.

It catalyses the reaction a 7beta-hydroxysteroid + NADP(+) = a 7-oxosteroid + NADPH + H(+). The catalysed reaction is 7-oxolithocholate + NADPH + H(+) = ursodeoxycholate + NADP(+). Its function is as follows. 7beta-hydroxysteroid dehydrogenase that catalyzes the reduction of the 7-oxo group of 7-oxo-lithocholate (7-oxo-LCA), to yield ursodeoxycholate (UDCA). As R.gnavus is a common core bacterium of the human gut microbiota, this enzyme contributes to the formation of UDCA in the human colon. UDCA is regarded as a chemopreventive beneficial secondary bile acid due to its low hydrophobicity; it protects hepatocytes and bile duct epithelial cells against necrosis and apoptosis induced by more hydrophobic secondary bile acids like deoxycholate (DCA). This enzyme is also able to catalyze the reverse reaction in vitro, i.e. the oxidation of the 7beta-hydroxy group of UDCA to 7-oxo-LCA, but much less efficiently than the reduction reaction. The polypeptide is 7beta-hydroxysteroid dehydrogenase (Mediterraneibacter gnavus (strain ATCC 29149 / DSM 114966 / JCM 6515 / VPI C7-9) (Ruminococcus gnavus)).